The sequence spans 452 residues: Pup--protein ligase (452 aa).

Glu9 is a Mg(2+) binding site. Arg53 is an ATP binding site. Tyr55 serves as a coordination point for Mg(2+). The active-site Proton acceptor is Asp57. Glu63 contacts Mg(2+). Residues Thr66 and Trp419 each coordinate ATP.

It belongs to the Pup ligase/Pup deamidase family. Pup-conjugating enzyme subfamily.

The catalysed reaction is ATP + [prokaryotic ubiquitin-like protein]-L-glutamate + [protein]-L-lysine = ADP + phosphate + N(6)-([prokaryotic ubiquitin-like protein]-gamma-L-glutamyl)-[protein]-L-lysine.. Its pathway is protein degradation; proteasomal Pup-dependent pathway. The protein operates within protein modification; protein pupylation. Its function is as follows. Catalyzes the covalent attachment of the prokaryotic ubiquitin-like protein modifier Pup to the proteasomal substrate proteins, thereby targeting them for proteasomal degradation. This tagging system is termed pupylation. The ligation reaction involves the side-chain carboxylate of the C-terminal glutamate of Pup and the side-chain amino group of a substrate lysine. In Nakamurella multipartita (strain ATCC 700099 / DSM 44233 / CIP 104796 / JCM 9543 / NBRC 105858 / Y-104) (Microsphaera multipartita), this protein is Pup--protein ligase.